The sequence spans 423 residues: Methylenetetrahydrofolate--tRNA-(uracil-5-)-methyltransferase TrmFO 2 (423 aa).

Residue Gly8 to Gly13 participates in FAD binding.

Belongs to the MnmG family. TrmFO subfamily. The cofactor is FAD.

It is found in the cytoplasm. It catalyses the reaction uridine(54) in tRNA + (6R)-5,10-methylene-5,6,7,8-tetrahydrofolate + NADH + H(+) = 5-methyluridine(54) in tRNA + (6S)-5,6,7,8-tetrahydrofolate + NAD(+). The catalysed reaction is uridine(54) in tRNA + (6R)-5,10-methylene-5,6,7,8-tetrahydrofolate + NADPH + H(+) = 5-methyluridine(54) in tRNA + (6S)-5,6,7,8-tetrahydrofolate + NADP(+). Catalyzes the folate-dependent formation of 5-methyl-uridine at position 54 (M-5-U54) in all tRNAs. This is Methylenetetrahydrofolate--tRNA-(uracil-5-)-methyltransferase TrmFO 2 from Mycoplasma capricolum subsp. capricolum (strain California kid / ATCC 27343 / NCTC 10154).